We begin with the raw amino-acid sequence, 88 residues long: Large ribosomal subunit protein bL27 (88 aa).

This sequence belongs to the bacterial ribosomal protein bL27 family.

This chain is Large ribosomal subunit protein bL27, found in Mycolicibacterium smegmatis (strain ATCC 700084 / mc(2)155) (Mycobacterium smegmatis).